The following is a 162-amino-acid chain: NADH-quinone oxidoreductase subunit I (162 aa).

2 4Fe-4S ferredoxin-type domains span residues 52–82 and 93–122; these read LRRYPNGEERCIACKLCEAICPAQAITIEAG and VRYDIDMVKCIYCGLCQEACPVDAIVEGPN. [4Fe-4S] cluster contacts are provided by C62, C65, C68, C72, C102, C105, C108, and C112.

It belongs to the complex I 23 kDa subunit family. In terms of assembly, NDH-1 is composed of 14 different subunits. Subunits NuoA, H, J, K, L, M, N constitute the membrane sector of the complex. Requires [4Fe-4S] cluster as cofactor.

Its subcellular location is the cell inner membrane. It catalyses the reaction a quinone + NADH + 5 H(+)(in) = a quinol + NAD(+) + 4 H(+)(out). Its function is as follows. NDH-1 shuttles electrons from NADH, via FMN and iron-sulfur (Fe-S) centers, to quinones in the respiratory chain. The immediate electron acceptor for the enzyme in this species is believed to be ubiquinone. Couples the redox reaction to proton translocation (for every two electrons transferred, four hydrogen ions are translocated across the cytoplasmic membrane), and thus conserves the redox energy in a proton gradient. The polypeptide is NADH-quinone oxidoreductase subunit I (Afipia carboxidovorans (strain ATCC 49405 / DSM 1227 / KCTC 32145 / OM5) (Oligotropha carboxidovorans)).